The primary structure comprises 239 residues: 1-(5-phosphoribosyl)-5-[(5-phosphoribosylamino)methylideneamino] imidazole-4-carboxamide isomerase (239 aa).

The Proton acceptor role is filled by Asp-12. The active-site Proton donor is Asp-132.

Belongs to the HisA/HisF family.

The protein localises to the cytoplasm. It carries out the reaction 1-(5-phospho-beta-D-ribosyl)-5-[(5-phospho-beta-D-ribosylamino)methylideneamino]imidazole-4-carboxamide = 5-[(5-phospho-1-deoxy-D-ribulos-1-ylimino)methylamino]-1-(5-phospho-beta-D-ribosyl)imidazole-4-carboxamide. It functions in the pathway amino-acid biosynthesis; L-histidine biosynthesis; L-histidine from 5-phospho-alpha-D-ribose 1-diphosphate: step 4/9. This chain is 1-(5-phosphoribosyl)-5-[(5-phosphoribosylamino)methylideneamino] imidazole-4-carboxamide isomerase, found in Natronomonas pharaonis (strain ATCC 35678 / DSM 2160 / CIP 103997 / JCM 8858 / NBRC 14720 / NCIMB 2260 / Gabara) (Halobacterium pharaonis).